The primary structure comprises 232 residues: Peroxiredoxin (232 aa).

In terms of domain architecture, Thioredoxin spans 6-161; the sequence is PSIGEKFPEI…ILRLIESLQI (156 aa). Cys-48 functions as the Cysteine sulfenic acid (-SOH) intermediate in the catalytic mechanism. Arg-124 provides a ligand contact to substrate. A disulfide bridge connects residues Cys-203 and Cys-209.

This sequence belongs to the peroxiredoxin family. Prx6 subfamily. Homodecamer. Pentamer of dimers that assemble into a ring structure.

The protein localises to the cytoplasm. It catalyses the reaction a hydroperoxide + [thioredoxin]-dithiol = an alcohol + [thioredoxin]-disulfide + H2O. Thiol-specific peroxidase that catalyzes the reduction of hydrogen peroxide and organic hydroperoxides to water and alcohols, respectively. Plays a role in cell protection against oxidative stress by detoxifying peroxides. In Hyperthermus butylicus (strain DSM 5456 / JCM 9403 / PLM1-5), this protein is Peroxiredoxin.